The primary structure comprises 452 residues: Exodeoxyribonuclease 7 large subunit (452 aa).

The protein belongs to the XseA family. In terms of assembly, heterooligomer composed of large and small subunits.

It localises to the cytoplasm. The enzyme catalyses Exonucleolytic cleavage in either 5'- to 3'- or 3'- to 5'-direction to yield nucleoside 5'-phosphates.. Bidirectionally degrades single-stranded DNA into large acid-insoluble oligonucleotides, which are then degraded further into small acid-soluble oligonucleotides. This chain is Exodeoxyribonuclease 7 large subunit, found in Lysinibacillus sphaericus (strain C3-41).